The primary structure comprises 127 residues: Aspartate 1-decarboxylase (127 aa).

Serine 25 serves as the catalytic Schiff-base intermediate with substrate; via pyruvic acid. Serine 25 is subject to Pyruvic acid (Ser). Threonine 57 lines the substrate pocket. Tyrosine 58 (proton donor) is an active-site residue. A substrate-binding site is contributed by 73–75 (GAA).

This sequence belongs to the PanD family. As to quaternary structure, heterooctamer of four alpha and four beta subunits. Pyruvate is required as a cofactor. Is synthesized initially as an inactive proenzyme, which is activated by self-cleavage at a specific serine bond to produce a beta-subunit with a hydroxyl group at its C-terminus and an alpha-subunit with a pyruvoyl group at its N-terminus.

It localises to the cytoplasm. The enzyme catalyses L-aspartate + H(+) = beta-alanine + CO2. The protein operates within cofactor biosynthesis; (R)-pantothenate biosynthesis; beta-alanine from L-aspartate: step 1/1. Functionally, catalyzes the pyruvoyl-dependent decarboxylation of aspartate to produce beta-alanine. The chain is Aspartate 1-decarboxylase from Carboxydothermus hydrogenoformans (strain ATCC BAA-161 / DSM 6008 / Z-2901).